Here is a 476-residue protein sequence, read N- to C-terminus: MRPGTSITPLSLTRRLGLFFALVLSIALASMGAFAYYSLAAQLEARDDEVVKGKLEQVEHFLREVDGVQGVPAAQHRFDDLVRGYSDLIVRVTALDGRLLFRTGNDALLEGTDQAAVTGKSSLMFQSADAVLGRDGTRATVFVAKSGEDRKQVTARFRTTLVLGTTVGVILTALVGAAITRRELEPAHVLIKQINRISVERLSYRVDMPPKPTEVRDIASAFNAMLQRLEDGYQKLSRFSADLAHDLRTPLNNLIGHAEVALSRDRTGPEYVALVEESLVEYQRLARMIDAMLFLARADSANVALELTELQLNAELRKLSAYFSVLAEERSVVIRVSGDATLVADAILFQRAINNVLSNAVRHAWPNSMIDLVVRREAAHCCIDITNVGDPIPERELSLIFDRFFRGDRARSNSSQSTGLGLAIVLSIMELHGGDASAVSGLDGKTRFTLRFPLNGAEASARVSVGRPSQDRPVVG.

An N-terminal signal peptide occupies residues 1–35; sequence MRPGTSITPLSLTRRLGLFFALVLSIALASMGAFA. Residues 37 to 158 are Periplasmic-facing; the sequence is YSLAAQLEAR…DRKQVTARFR (122 aa). A helical membrane pass occupies residues 159–179; the sequence is TTLVLGTTVGVILTALVGAAI. The Cytoplasmic segment spans residues 180-476; the sequence is TRRELEPAHV…RPSQDRPVVG (297 aa). The HAMP domain occupies 181-234; sequence RRELEPAHVLIKQINRISVERLSYRVDMPPKPTEVRDIASAFNAMLQRLEDGYQ. In terms of domain architecture, Histidine kinase spans 242 to 455; the sequence is DLAHDLRTPL…TRFTLRFPLN (214 aa). A Phosphohistidine; by autocatalysis modification is found at His245.

It localises to the cell inner membrane. The catalysed reaction is ATP + protein L-histidine = ADP + protein N-phospho-L-histidine.. Functionally, member of the two-component regulatory system CzcS/CzcR involved in the control of cobalt, zinc and cadmium homeostasis. Probably activates CzcR by phosphorylation. This is Sensor protein CzcS (czcS) from Cupriavidus metallidurans (strain ATCC 43123 / DSM 2839 / NBRC 102507 / CH34) (Ralstonia metallidurans).